Reading from the N-terminus, the 148-residue chain is MRMSTSTEVIAHHWAFAIFLIIAIGLCCLMLVGGWYLGGRARARSKNTPFESGIDSVGSARLRLSAKFYLVAMFFVIFDVEALYLYAWSTSIRESGWVGFVEAAIFILVLLAGLVYLVRIGALDWTPARSRRTLVNPETDSPTNRHMQ.

The next 3 helical transmembrane spans lie at 14–34, 68–88, and 98–118; these read WAFA…LVGG, FYLV…LYAW, and VGFV…VYLV.

The protein belongs to the complex I subunit 3 family. As to quaternary structure, NDH-1 is composed of 13 different subunits. Subunits NuoA, H, J, K, L, M, N constitute the membrane sector of the complex.

It is found in the cell inner membrane. It catalyses the reaction a quinone + NADH + 5 H(+)(in) = a quinol + NAD(+) + 4 H(+)(out). Its function is as follows. NDH-1 shuttles electrons from NADH, via FMN and iron-sulfur (Fe-S) centers, to quinones in the respiratory chain. The immediate electron acceptor for the enzyme in this species is believed to be ubiquinone. Couples the redox reaction to proton translocation (for every two electrons transferred, four hydrogen ions are translocated across the cytoplasmic membrane), and thus conserves the redox energy in a proton gradient. The protein is NADH-quinone oxidoreductase subunit A of Klebsiella pneumoniae subsp. pneumoniae (strain ATCC 700721 / MGH 78578).